The chain runs to 378 residues: MTQSTFGIEEEYFLTDLTSRQVARRNVEAFATACQYELGERVTREMFAAQFEVVTPVLHSLTDARQCLEGARRALARLAREFDCGVLAAGTHPLGQWRRVRATDMPRYRAIFDDYRMVASRSVLAGLHVHVGVAEGVDRIRLMNRLTPWLPLLLGLSASSPFWNGRPSGLMSYRQAVCDEWPRMGIPDHFADEAEYQRYVQVMTDTGCIRSAANLWWNIRPSLRYPTLELRIADACPRLDDALCLAGLFRAMVEHVQLTPHHAWCDDPLTRVLTLENRWRAKRQGLRGLFIEPASQRLLTFATWLEEVLERIAIQVPASDRWILEHARNLALHGGSAEAQLAEYRGARANGLEHGEALHQVVDSLMAQTELHPSQQLA.

This sequence belongs to the glutamate--cysteine ligase type 2 family. YbdK subfamily.

It carries out the reaction L-cysteine + L-glutamate + ATP = gamma-L-glutamyl-L-cysteine + ADP + phosphate + H(+). Its function is as follows. ATP-dependent carboxylate-amine ligase which exhibits weak glutamate--cysteine ligase activity. The sequence is that of Putative glutamate--cysteine ligase 2 from Ectopseudomonas mendocina (strain ymp) (Pseudomonas mendocina).